The chain runs to 332 residues: Biotin synthase (332 aa).

In terms of domain architecture, Radical SAM core spans 53 to 282 (YFGKKVKLNM…TKEIRISGGR (230 aa)). Residues Cys71, Cys75, and Cys78 each contribute to the [4Fe-4S] cluster site. Residues Cys115, Cys147, Cys207, and Arg277 each coordinate [2Fe-2S] cluster.

This sequence belongs to the radical SAM superfamily. Biotin synthase family. As to quaternary structure, homodimer. It depends on [4Fe-4S] cluster as a cofactor. [2Fe-2S] cluster is required as a cofactor.

The catalysed reaction is (4R,5S)-dethiobiotin + (sulfur carrier)-SH + 2 reduced [2Fe-2S]-[ferredoxin] + 2 S-adenosyl-L-methionine = (sulfur carrier)-H + biotin + 2 5'-deoxyadenosine + 2 L-methionine + 2 oxidized [2Fe-2S]-[ferredoxin]. It participates in cofactor biosynthesis; biotin biosynthesis; biotin from 7,8-diaminononanoate: step 2/2. In terms of biological role, catalyzes the conversion of dethiobiotin (DTB) to biotin by the insertion of a sulfur atom into dethiobiotin via a radical-based mechanism. This is Biotin synthase from Bacillus thuringiensis (strain Al Hakam).